A 352-amino-acid chain; its full sequence is Putative F-box protein At5g14160 (352 aa).

One can recognise an F-box domain in the interval 14 to 60; it reads GVDWSELPEDVIRLVLRRLRLSDFHRARAVCSTWCRVWGDCVSKPNQ.

The polypeptide is Putative F-box protein At5g14160 (Arabidopsis thaliana (Mouse-ear cress)).